We begin with the raw amino-acid sequence, 194 residues long: 21 kDa hemolysin (194 aa).

Positions 1 to 19 (MRTRSRSTVRPLWPPPSPA) are cleaved as a signal peptide. BON domains are found at residues 49-118 (DDEV…RTGE) and 127-194 (IDSW…NYVQ).

The protein localises to the periplasm. The chain is 21 kDa hemolysin (hly) from Actinobacillus pleuropneumoniae (Haemophilus pleuropneumoniae).